Here is a 428-residue protein sequence, read N- to C-terminus: Protein terminus (428 aa).

A C3H1-type zinc finger spans residues cysteine 325–cysteine 346.

The protein is Protein terminus (term) of Drosophila melanogaster (Fruit fly).